We begin with the raw amino-acid sequence, 256 residues long: Alcohol dehydrogenase (256 aa).

12–35 (FVAGLGGIGLDTSKELVKRDLKNL) contributes to the NAD(+) binding site. Ser140 provides a ligand contact to substrate. Tyr153 serves as the catalytic Proton acceptor.

It belongs to the short-chain dehydrogenases/reductases (SDR) family. In terms of assembly, homodimer.

It catalyses the reaction a primary alcohol + NAD(+) = an aldehyde + NADH + H(+). The enzyme catalyses a secondary alcohol + NAD(+) = a ketone + NADH + H(+). The sequence is that of Alcohol dehydrogenase (Adh) from Drosophila teissieri (Fruit fly).